The sequence spans 183 residues: Transcription factor E (183 aa).

The HTH TFE/IIEalpha-type domain maps to 4 to 97 (YIELVRRYVY…SWSIKDEDIR (94 aa)).

It belongs to the TFE family. In terms of assembly, monomer. Interaction with RNA polymerase subunits RpoF and RpoE is necessary for Tfe stimulatory transcription activity. Able to interact with Tbp and RNA polymerase in the absence of DNA promoter. Interacts both with the preinitiation and elongation complexes.

Functionally, transcription factor that plays a role in the activation of archaeal genes transcribed by RNA polymerase. Facilitates transcription initiation by enhancing TATA-box recognition by TATA-box-binding protein (Tbp), and transcription factor B (Tfb) and RNA polymerase recruitment. Not absolutely required for transcription in vitro, but particularly important in cases where Tbp or Tfb function is not optimal. It dynamically alters the nucleic acid-binding properties of RNA polymerases by stabilizing the initiation complex and destabilizing elongation complexes. Seems to translocate with the RNA polymerase following initiation and acts by binding to the non template strand of the transcription bubble in elongation complexes. The sequence is that of Transcription factor E from Caldivirga maquilingensis (strain ATCC 700844 / DSM 13496 / JCM 10307 / IC-167).